Reading from the N-terminus, the 2647-residue chain is Filamin-A (2647 aa).

Over residues 1–15 the composition is skewed to low complexity; it reads MSSSHSRAGQSAAGA. Residues 1-39 are disordered; sequence MSSSHSRAGQSAAGAAPGGGVDTRDAEMPATEKDLAEDA. Position 2 is an N-acetylserine (serine 2). The tract at residues 2–274 is actin-binding; the sequence is SSSHSRAGQS…PKAKLKPGAP (273 aa). Phosphoserine is present on serine 11. A compositionally biased stretch (basic and acidic residues) spans 22–39; it reads DTRDAEMPATEKDLAEDA. Glycyl lysine isopeptide (Lys-Gly) (interchain with G-Cter in ubiquitin) cross-links involve residues lysine 42, lysine 43, and lysine 135. Calponin-homology (CH) domains lie at 43–149 and 166–269; these read KIQQ…LHYS and QTPK…KAKL. A disordered region spans residues 271–294; it reads PGAPLRPKLNPKKARAYGPGIEPT. Filamin repeat units lie at residues 276-374, 376-474, 475-570, 571-663, 667-763, 764-866, 867-965, 966-1061, 1062-1154, 1155-1249, 1250-1349, 1350-1442, 1443-1539, 1540-1636, and 1649-1740; these read RPKL…EVYV, KSQG…TVTV, GQAC…EVKV, GTEC…MADI, PQDF…RVNV, GAGS…RVKV, EPSH…SVAV, SPSL…PLEA, VAPT…KAHV, VPCF…KLQV, EPAV…QVPV, TEGC…KVPV, HDVT…KVKV, LPTH…RVRA, and VSIG…QVTA. Residue lysine 299 forms a Glycyl lysine isopeptide (Lys-Gly) (interchain with G-Cter in SUMO1); alternate linkage. A Glycyl lysine isopeptide (Lys-Gly) (interchain with G-Cter in SUMO2); alternate cross-link involves residue lysine 299. N6-acetyllysine is present on residues lysine 376 and lysine 508. Lysine 700, lysine 781, lysine 837, lysine 865, and lysine 906 each carry N6-acetyllysine. Phosphoserine occurs at positions 968 and 1055. N6-acetyllysine; alternate is present on lysine 1071. Lysine 1071 is modified (N6-succinyllysine; alternate). Phosphoserine is present on residues serine 1081 and serine 1084. Threonine 1089 is modified (phosphothreonine). Phosphoserine occurs at positions 1301 and 1338. Residues 1361 to 1382 form a disordered region; the sequence is HGPGIQSGTTNKPNKFTVETRG. An N6-acetyllysine modification is found at lysine 1372. Residues serine 1459 and serine 1533 each carry the phosphoserine modification. The tract at residues 1490-1607 is interaction with furin; sequence PKGLVEPVDV…DNHDGTYTVA (118 aa). Position 1538 is an N6-acetyllysine (lysine 1538). Serine 1630 and serine 1734 each carry phosphoserine. A hinge 1 region spans residues 1741 to 1778; that stretch reads LAGDQPSVQPPLRSQQLAPQYTYAQGGQQTWAPERPLV. Filamin repeat units follow at residues 1779 to 1860, 1861 to 1950, 1951 to 2039, 2042 to 2131, 2132 to 2230, 2233 to 2325, 2327 to 2420, and 2424 to 2516; these read GVNG…QFYV, DYVN…PFTA, RVTG…PVVI, SEIG…SPFS, VKVT…QFTV, LGEG…VVPV, SPSG…KIRV, and GHGG…KAKV. Phosphoserine is present on serine 1835. Phosphoserine occurs at positions 1967, 2053, 2128, 2152, 2158, 2163, 2180, 2284, 2327, and 2329. The residue at position 2336 (threonine 2336) is a Phosphothreonine. Serine 2338, serine 2370, serine 2414, serine 2510, serine 2523, and serine 2526 each carry phosphoserine. A hinge 2 region spans residues 2517–2551; that stretch reads TGPRLVSNHSLHETSSVFVDSLTKATCAPQHGAPG. Residues 2517 to 2647 form a self-association site, tail region; the sequence is TGPRLVSNHS…PGSPYRVVVP (131 aa). The Filamin 24 repeat unit spans residues 2552 to 2646; that stretch reads PGPADASKVV…IPGSPYRVVV (95 aa). The residue at position 2569 (lysine 2569) is an N6-acetyllysine; alternate. Lysine 2569 carries the N6-succinyllysine; alternate modification. Lysine 2575 bears the N6-acetyllysine mark. Threonine 2599 is modified (phosphothreonine). N6-acetyllysine is present on residues lysine 2607 and lysine 2621.

Belongs to the filamin family. In terms of assembly, homodimer. Interacts with PDLIM2. Interacts with RFLNA and RFLNB. Interacts with FCGR1A, FLNB, FURIN, HSPB7, INPPL1, KCND2, MYOT, MYOZ1, ARHGAP24, PSEN1, PSEN2 and ECSCR. Also interacts with various other binding partners in addition to filamentous actin. Interacts (via N-terminus) with MIS18BP1 (via N-terminus). Interacts (via N-terminus) with TAF1B. Interacts with TMEM67 (via C-terminus) and MKS1. Interacts (via actin-binding domain) with MICALL2 (via CH domain). Interacts (via filamin repeat 5) with SYK; docks SYK to the plasma membrane. Interacts (via filamin repeats 19 and 21) with DRD3; increased PKA-mediated phosphorylation at Ser-2152. Interacts (via filamin repeat 21) with MAS1, AGTR1 and ADRA1D; increases PKA-mediated phosphorylation of FLNA at Ser-2152. Interacts (via filamin repeats 4, 9, 12, 17, 19, 21, and 23) with GP1BA (high affinity), ITGB7, ITGB2 and FBLIM1. Interacts with CEACAM1 (via cytoplasmic domain); inhibits cell migration and cell scattering by interfering with the interaction between FLNA and RALA. Interacts with FOXC1. Interacts (via calponin-homology (CH) domain 1 and filamin repeat 24) with CRMP1; the interaction alters FLNA ternary structure and thus promotes FLNA dissociation from F-actin. Interacts with DPYSL3/CRMP3 and DPYSL4/CRMP4. As to quaternary structure, interacts with integrin ITGB1 isoform 1/beta-1A and isoform 5/beta-1D. Interacts with LUZP1; the interaction is not necessary for colocalization of LUZP1 with F-actin. In terms of processing, phosphorylation at Ser-2152 is negatively regulated by the autoinhibited conformation of filamin repeats 19-21. Ligand binding induces a conformational switch triggering phosphorylation at Ser-2152 by PKA. Post-translationally, phosphorylation extent changes in response to cell activation. Polyubiquitination in the CH1 domain by a SCF-like complex containing ASB2 leads to proteasomal degradation. Prior dissociation from actin may be required to expose the target lysines. Ubiquitinated in endothelial cells by RNF213 downstream of the non-canonical Wnt signaling pathway, leading to its degradation by the proteasome. In terms of tissue distribution, ubiquitous.

The protein localises to the cytoplasm. The protein resides in the cell cortex. It localises to the cytoskeleton. It is found in the perikaryon. Its subcellular location is the cell projection. The protein localises to the growth cone. The protein resides in the podosome. In terms of biological role, promotes orthogonal branching of actin filaments and links actin filaments to membrane glycoproteins. Anchors various transmembrane proteins to the actin cytoskeleton and serves as a scaffold for a wide range of cytoplasmic signaling proteins. Interaction with FLNB may allow neuroblast migration from the ventricular zone into the cortical plate. Tethers cell surface-localized furin, modulates its rate of internalization and directs its intracellular trafficking. Involved in ciliogenesis. Plays a role in cell-cell contacts and adherens junctions during the development of blood vessels, heart and brain organs. Plays a role in platelets morphology through interaction with SYK that regulates ITAM- and ITAM-like-containing receptor signaling, resulting in by platelet cytoskeleton organization maintenance. During the axon guidance process, required for growth cone collapse induced by SEMA3A-mediated stimulation of neurons. The chain is Filamin-A (FLNA) from Homo sapiens (Human).